Consider the following 476-residue polypeptide: Protein transport protein Sec61 subunit alpha isoform B (476 aa).

Residues 2–33 (GIKFLEVIKPFCAVLPEIQKPERKIQFREKVL) lie on the Cytoplasmic side of the membrane. Residues 34 to 53 (WTAITLFIFLVCCQIPLFGI) traverse the membrane as a helical segment. The Lumenal segment spans residues 54–76 (MSSDSADPFYWMRVILASNRGTL). Residues 77-96 (MELGISPIVTSGLIMQLLAG) traverse the membrane as a helical segment. Topologically, residues 97-117 (AKIIEVGDTPKDRALFNGAQK) are cytoplasmic. Residues 118-138 (LFGMIITIGQAIVYVMTGMYG) traverse the membrane as a helical segment. Over 139–144 (DPSDMG) the chain is Lumenal. A helical membrane pass occupies residues 145 to 165 (AGICLLIIIQLFVAGLIVLLL). The Cytoplasmic segment spans residues 166–172 (DELLQKG). The helical transmembrane segment at 173–193 (YGLGSGISLFIATNICETIVW) threads the bilayer. Residues 194–240 (KAFSPTTVNTGRGTEFEGAIIALFHLLATRTDKVRALREAFYRQNLP) are Lumenal-facing. A helical transmembrane segment spans residues 241–261 (NLMNLLATVFVFGVVIYFQGF). The Cytoplasmic segment spans residues 262–288 (RVDLPIKSARYRGQYNTYPIKLFYTSN). Residues 289-309 (IPIILQSALVSNLYVISQMLS) form a helical membrane-spanning segment. The Lumenal portion of the chain corresponds to 310 to 354 (TRFSGNFLVNLLGTWSDTSSGGPARAYPVGGLCYYFSPPESFGSV). A helical membrane pass occupies residues 355–375 (LDDPIHAAIYICFMLGSCAFF). The Cytoplasmic segment spans residues 376 to 420 (SKTWIEVSGSSAKDVAKQLKEQQMVMRGHRETSMVHELNRYIPTA). The chain crosses the membrane as a helical span at residues 421-441 (AAFGGLCIGGLSVMADFLGAI). Topologically, residues 442–445 (GSGT) are lumenal. Residues 446 to 462 (GILLAVTIIYQYFEIFV) form a helical membrane-spanning segment. Residues 463–476 (KEQSEMGSMGALLF) are Cytoplasmic-facing.

This sequence belongs to the SecY/SEC61-alpha family. In terms of assembly, the SEC61 channel-forming translocon complex consists of channel-forming core components SEC61A1, SEC61B and SEC61G and different auxiliary components such as SEC62 and SEC63.

It is found in the endoplasmic reticulum membrane. In terms of biological role, component of SEC61 channel-forming translocon complex that mediates transport of signal peptide-containing precursor polypeptides across the endoplasmic reticulum (ER). Forms a ribosome receptor and a gated pore in the ER membrane, both functions required for cotranslational translocation of nascent polypeptides. The protein is Protein transport protein Sec61 subunit alpha isoform B (sec61ab) of Oncorhynchus mykiss (Rainbow trout).